The following is a 201-amino-acid chain: Alpha-1-acid glycoprotein (201 aa).

The signal sequence occupies residues 1–18; the sequence is MALPWALAVLSLLPLLHA. N-linked (GlcNAc...) asparagine glycosylation is found at Asn-25, Asn-33, Asn-87, Asn-93, Asn-103, and Asn-169. Cys-90 and Cys-183 are oxidised to a cystine.

Belongs to the calycin superfamily. Lipocalin family.

It localises to the secreted. Functionally, functions as a transport protein in the blood stream. Binds various ligands in the interior of its beta-barrel domain. Appears to function in modulating the activity of the immune system during the acute-phase reaction. The protein is Alpha-1-acid glycoprotein (ORM1) of Oryctolagus cuniculus (Rabbit).